The sequence spans 133 residues: Large ribosomal subunit protein bL17 (133 aa).

This sequence belongs to the bacterial ribosomal protein bL17 family. As to quaternary structure, part of the 50S ribosomal subunit. Contacts protein L32.

This Ehrlichia chaffeensis (strain ATCC CRL-10679 / Arkansas) protein is Large ribosomal subunit protein bL17.